The sequence spans 1295 residues: Phosphoribosylformylglycinamidine synthase (1295 aa).

ATP contacts are provided by residues 305 to 316 (GAATGSGGEIRD), 384 to 386 (TGY), and alanine 676. Mg(2+) contacts are provided by aspartate 677, glutamate 716, asparagine 720, and aspartate 884. Serine 886 contacts ATP. In terms of domain architecture, Glutamine amidotransferase type-1 spans 1042 to 1295 (VAILREQGVN…MFRNARKHLG (254 aa)). Cysteine 1135 serves as the catalytic Nucleophile. Active-site residues include histidine 1260 and glutamate 1262.

It in the N-terminal section; belongs to the FGAMS family. As to quaternary structure, monomer.

It localises to the cytoplasm. It carries out the reaction N(2)-formyl-N(1)-(5-phospho-beta-D-ribosyl)glycinamide + L-glutamine + ATP + H2O = 2-formamido-N(1)-(5-O-phospho-beta-D-ribosyl)acetamidine + L-glutamate + ADP + phosphate + H(+). It participates in purine metabolism; IMP biosynthesis via de novo pathway; 5-amino-1-(5-phospho-D-ribosyl)imidazole from N(2)-formyl-N(1)-(5-phospho-D-ribosyl)glycinamide: step 1/2. Its function is as follows. Phosphoribosylformylglycinamidine synthase involved in the purines biosynthetic pathway. Catalyzes the ATP-dependent conversion of formylglycinamide ribonucleotide (FGAR) and glutamine to yield formylglycinamidine ribonucleotide (FGAM) and glutamate. The chain is Phosphoribosylformylglycinamidine synthase from Idiomarina loihiensis (strain ATCC BAA-735 / DSM 15497 / L2-TR).